The chain runs to 564 residues: Sulfite reductase [NADPH] hemoprotein beta-component 2 (564 aa).

Cys426, Cys432, Cys471, and Cys475 together coordinate [4Fe-4S] cluster. Residue Cys475 participates in siroheme binding.

This sequence belongs to the nitrite and sulfite reductase 4Fe-4S domain family. Alpha(8)-beta(8). The alpha component is a flavoprotein, the beta component is a hemoprotein. Siroheme serves as cofactor. The cofactor is [4Fe-4S] cluster.

It catalyses the reaction hydrogen sulfide + 3 NADP(+) + 3 H2O = sulfite + 3 NADPH + 4 H(+). Its pathway is sulfur metabolism; hydrogen sulfide biosynthesis; hydrogen sulfide from sulfite (NADPH route): step 1/1. Functionally, component of the sulfite reductase complex that catalyzes the 6-electron reduction of sulfite to sulfide. This is one of several activities required for the biosynthesis of L-cysteine from sulfate. The sequence is that of Sulfite reductase [NADPH] hemoprotein beta-component 2 from Klebsiella pneumoniae (strain 342).